Here is a 317-residue protein sequence, read N- to C-terminus: Transaldolase (317 aa).

Lys-132 acts as the Schiff-base intermediate with substrate in catalysis.

It belongs to the transaldolase family. Type 1 subfamily. As to quaternary structure, homodimer.

It is found in the cytoplasm. It carries out the reaction D-sedoheptulose 7-phosphate + D-glyceraldehyde 3-phosphate = D-erythrose 4-phosphate + beta-D-fructose 6-phosphate. Its pathway is carbohydrate degradation; pentose phosphate pathway; D-glyceraldehyde 3-phosphate and beta-D-fructose 6-phosphate from D-ribose 5-phosphate and D-xylulose 5-phosphate (non-oxidative stage): step 2/3. Transaldolase is important for the balance of metabolites in the pentose-phosphate pathway. The protein is Transaldolase of Photorhabdus laumondii subsp. laumondii (strain DSM 15139 / CIP 105565 / TT01) (Photorhabdus luminescens subsp. laumondii).